The sequence spans 350 residues: Cyclin-O (350 aa).

Residues 1–89 (MVTPCPTSPS…GSPLPGPAQP (89 aa)) are disordered. Residues 28 to 42 (PVKKSRRPRLRRKQP) are compositionally biased toward basic residues. Residue serine 81 is modified to Phosphoserine.

Belongs to the cyclin family. Present in respiratory cells (at protein level).

Its subcellular location is the cytoplasm. The protein localises to the nucleus. The protein resides in the nucleolus. In terms of biological role, specifically required for generation of multiciliated cells, possibly by promoting a cell cycle state compatible with centriole amplification and maturation. Acts downstream of MCIDAS to promote mother centriole amplification and maturation in preparation for apical docking. The chain is Cyclin-O from Homo sapiens (Human).